The primary structure comprises 251 residues: Keratin-associated protein 10-10 (251 aa).

Repeat copies occupy residues 26-30 (CCEPC), 31-35 (CCAPA), 52-56 (CCQTA), 84-88 (CCTSS), 94-98 (CCVPV), 99-103 (CCVPV), 104-109 (CCVPVC), 126-130 (CCQQS), 136-140 (CCTSS), 146-150 (CCVPV), 168-172 (CCQQS), 178-182 (CCTAS), 183-187 (CCRPS), 202-206 (CCVPV), and 220-224 (CCRTA). A 15 X 5 AA repeats of C-C-X(3) region spans residues 26 to 224 (CCEPCCCAPA…SCQPSCCRTA (199 aa)).

It belongs to the KRTAP type 10 family. In terms of assembly, interacts with hair keratins. In terms of tissue distribution, restricted to a narrow region of the hair fiber cuticle, lying approximately 20 cell layers above the apex of the dermal papilla of the hair root; not detected in any other tissues.

In terms of biological role, in the hair cortex, hair keratin intermediate filaments are embedded in an interfilamentous matrix, consisting of hair keratin-associated proteins (KRTAP), which are essential for the formation of a rigid and resistant hair shaft through their extensive disulfide bond cross-linking with abundant cysteine residues of hair keratins. The matrix proteins include the high-sulfur and high-glycine-tyrosine keratins. The protein is Keratin-associated protein 10-10 (KRTAP10-10) of Homo sapiens (Human).